Reading from the N-terminus, the 193-residue chain is Xanthine phosphoribosyltransferase (193 aa).

2 residues coordinate xanthine: Leu20 and Thr27. 128 to 132 (ANGQA) is a binding site for 5-phospho-alpha-D-ribose 1-diphosphate. Xanthine is bound at residue Lys156.

It belongs to the purine/pyrimidine phosphoribosyltransferase family. Xpt subfamily. Homodimer.

Its subcellular location is the cytoplasm. It carries out the reaction XMP + diphosphate = xanthine + 5-phospho-alpha-D-ribose 1-diphosphate. The protein operates within purine metabolism; XMP biosynthesis via salvage pathway; XMP from xanthine: step 1/1. In terms of biological role, converts the preformed base xanthine, a product of nucleic acid breakdown, to xanthosine 5'-monophosphate (XMP), so it can be reused for RNA or DNA synthesis. This chain is Xanthine phosphoribosyltransferase, found in Streptococcus pyogenes serotype M49 (strain NZ131).